The primary structure comprises 207 residues: uncharacterized protein (207 aa).

The helical transmembrane segment at 177–197 (LILAIGFIIGILLPTFFILLG) threads the bilayer.

Its subcellular location is the membrane. This is an uncharacterized protein from Haemophilus influenzae (strain ATCC 51907 / DSM 11121 / KW20 / Rd).